The following is a 302-amino-acid chain: Methylsterol monooxygenase erg25A (302 aa).

A glycan (N-linked (GlcNAc...) asparagine) is linked at N5. The next 3 membrane-spanning stretches (helical) occupy residues 47 to 67, 105 to 125, and 132 to 152; these read NIVA…IYFS, YILL…HPMM, and FTIP…FFLL. Residues 147–283 form the Fatty acid hydroxylase domain; that stretch reads IIFFLLEDTY…FRHWDVLMGT (137 aa). The short motif at 161 to 165 is the Histidine box-1 element; that stretch reads HRAMH. A Histidine box-2 motif is present at residues 174–178; the sequence is HRIHH. The chain crosses the membrane as a helical span at residues 193 to 213; that stretch reads PWETLLLGLGTIGPPLLLALM. Residues 258-264 carry the Histidine box-3 motif; the sequence is WHDDHHR. N-linked (GlcNAc...) asparagine glycosylation is present at N269.

This sequence belongs to the sterol desaturase family. It depends on Fe cation as a cofactor.

It localises to the endoplasmic reticulum membrane. The protein operates within steroid metabolism; ergosterol biosynthesis. Its function is as follows. Sterol-C4-methyl oxidase; part of the third module of ergosterol biosynthesis pathway that includes the late steps of the pathway. Erg25A is a catalytic component of the C-4 demethylation complex that catalyzes the conversion of 4,4-dimethylfecosterol into fecosterol via 4-methylfecosterol. The third module or late pathway involves the ergosterol synthesis itself through consecutive reactions that mainly occur in the endoplasmic reticulum (ER) membrane. Firstly, the squalene synthase erg9 catalyzes the condensation of 2 farnesyl pyrophosphate moieties to form squalene, which is the precursor of all steroids. Squalene synthase is crucial for balancing the incorporation of farnesyl diphosphate (FPP) into sterol and nonsterol isoprene synthesis. Secondly, squalene is converted into lanosterol by the consecutive action of the squalene epoxidase erg1 and the lanosterol synthase erg7. Then, the delta(24)-sterol C-methyltransferase erg6 methylates lanosterol at C-24 to produce eburicol. Eburicol is the substrate of the sterol 14-alpha demethylase encoded by cyp51A and cyp51B, to yield 4,4,24-trimethyl ergosta-8,14,24(28)-trienol. The C-14 reductase erg24 then reduces the C14=C15 double bond which leads to 4,4-dimethylfecosterol. A sequence of further demethylations at C-4, involving the C-4 demethylation complex containing the C-4 methylsterol oxidases erg25A or erg25B, the sterol-4-alpha-carboxylate 3-dehydrogenase erg26 and the 3-keto-steroid reductase erg27, leads to the production of fecosterol via 4-methylfecosterol. The C-8 sterol isomerase erg2 then catalyzes the reaction which results in unsaturation at C-7 in the B ring of sterols and thus converts fecosterol to episterol. The sterol-C5-desaturase erg3B then catalyzes the introduction of a C-5 double bond in the B ring to produce 5-dehydroepisterol. The 2 other sterol-C5-desaturases, erg3A and erg3C, seem to be less important in ergosterol biosynthesis. The C-22 sterol desaturase erg5 further converts 5-dehydroepisterol into ergosta-5,7,22,24(28)-tetraen-3beta-ol by forming the C-22(23) double bond in the sterol side chain. Finally, ergosta-5,7,22,24(28)-tetraen-3beta-ol is substrate of the C-24(28) sterol reductases erg4A and erg4B to produce ergosterol. Possible alternative sterol biosynthetic pathways might exist from fecosterol to ergosterol, depending on the activities of the erg3 isoforms. This Aspergillus fumigatus (strain ATCC MYA-4609 / CBS 101355 / FGSC A1100 / Af293) (Neosartorya fumigata) protein is Methylsterol monooxygenase erg25A.